The sequence spans 437 residues: GTPase Der (437 aa).

2 consecutive EngA-type G domains span residues 3 to 168 (PLIA…PESE) and 178 to 353 (VKLA…RNRS). Residues 9–16 (GRPNVGKS), 56–60 (DTGGY), 120–123 (NKVE), 184–191 (GRPNVGKS), 231–235 (DTAGL), and 296–299 (NKWD) each bind GTP. In terms of domain architecture, KH-like spans 354-437 (RKISTSSLNR…VPISLRFMEK (84 aa)).

This sequence belongs to the TRAFAC class TrmE-Era-EngA-EngB-Septin-like GTPase superfamily. EngA (Der) GTPase family. Associates with the 50S ribosomal subunit.

Functionally, GTPase that plays an essential role in the late steps of ribosome biogenesis. The polypeptide is GTPase Der (Chlorobium limicola (strain DSM 245 / NBRC 103803 / 6330)).